The primary structure comprises 459 residues: Argininosuccinate lyase (459 aa).

Belongs to the lyase 1 family. Argininosuccinate lyase subfamily.

Its subcellular location is the cytoplasm. The catalysed reaction is 2-(N(omega)-L-arginino)succinate = fumarate + L-arginine. Its pathway is amino-acid biosynthesis; L-arginine biosynthesis; L-arginine from L-ornithine and carbamoyl phosphate: step 3/3. The polypeptide is Argininosuccinate lyase (Photorhabdus laumondii subsp. laumondii (strain DSM 15139 / CIP 105565 / TT01) (Photorhabdus luminescens subsp. laumondii)).